A 542-amino-acid polypeptide reads, in one-letter code: Chaperonin GroEL (542 aa).

ATP is bound by residues 29–32, 86–90, glycine 413, 476–478, and aspartate 492; these read TLGP, DGTTT, and NAA. Residues 521–542 form a disordered region; it reads QPDENGPAAGPDMGMGGMGGMM. Residues 533–542 show a composition bias toward gly residues; it reads MGMGGMGGMM.

This sequence belongs to the chaperonin (HSP60) family. As to quaternary structure, forms a cylinder of 14 subunits composed of two heptameric rings stacked back-to-back. Interacts with the co-chaperonin GroES.

Its subcellular location is the cytoplasm. It catalyses the reaction ATP + H2O + a folded polypeptide = ADP + phosphate + an unfolded polypeptide.. Its function is as follows. Together with its co-chaperonin GroES, plays an essential role in assisting protein folding. The GroEL-GroES system forms a nano-cage that allows encapsulation of the non-native substrate proteins and provides a physical environment optimized to promote and accelerate protein folding. This Listeria innocua serovar 6a (strain ATCC BAA-680 / CLIP 11262) protein is Chaperonin GroEL.